The chain runs to 290 residues: Ribosomal RNA small subunit methyltransferase A (290 aa).

The S-adenosyl-L-methionine site is built by Asn27, Leu29, Gly54, Glu75, Asp100, and Asn125.

It belongs to the class I-like SAM-binding methyltransferase superfamily. rRNA adenine N(6)-methyltransferase family. RsmA subfamily.

The protein localises to the cytoplasm. It catalyses the reaction adenosine(1518)/adenosine(1519) in 16S rRNA + 4 S-adenosyl-L-methionine = N(6)-dimethyladenosine(1518)/N(6)-dimethyladenosine(1519) in 16S rRNA + 4 S-adenosyl-L-homocysteine + 4 H(+). In terms of biological role, specifically dimethylates two adjacent adenosines (A1518 and A1519) in the loop of a conserved hairpin near the 3'-end of 16S rRNA in the 30S particle. May play a critical role in biogenesis of 30S subunits. This chain is Ribosomal RNA small subunit methyltransferase A, found in Streptococcus pneumoniae (strain ATCC 700669 / Spain 23F-1).